A 468-amino-acid polypeptide reads, in one-letter code: Elongation factor 1-alpha (468 aa).

The tr-type G domain maps to 6–244 (KPHINIVVIG…DNIPLPARPS (239 aa)). The tract at residues 15 to 22 (GHVDSGKS) is G1. Position 15-22 (15-22 (GHVDSGKS)) interacts with GTP. The segment at 71–75 (GITID) is G2. The G3 stretch occupies residues 92-95 (DAPG). Residues 92 to 96 (DAPGH) and 154 to 157 (NKID) each bind GTP. Positions 154–157 (NKID) are G4. Residues 195-197 (SGW) are G5. 2 positions are modified to 5-glutamyl glycerylphosphorylethanolamine: Glu303 and Glu376.

This sequence belongs to the TRAFAC class translation factor GTPase superfamily. Classic translation factor GTPase family. EF-Tu/EF-1A subfamily.

The protein resides in the cytoplasm. This protein promotes the GTP-dependent binding of aminoacyl-tRNA to the A-site of ribosomes during protein biosynthesis. This Hydra vulgaris (Hydra) protein is Elongation factor 1-alpha.